We begin with the raw amino-acid sequence, 95 residues long: Small ribosomal subunit protein bS20c (95 aa).

It belongs to the bacterial ribosomal protein bS20 family.

It is found in the plastid. The protein resides in the cyanelle. In terms of biological role, binds directly to 16S ribosomal RNA. This chain is Small ribosomal subunit protein bS20c (rps20), found in Cyanophora paradoxa.